A 556-amino-acid chain; its full sequence is CDP-diacylglycerol--glycerol-3-phosphate 3-phosphatidyltransferase, mitochondrial (556 aa).

The transit peptide at 1 to 28 (MAAAAAAAAGPVFWRRLLGLLPGRPGLA) directs the protein to the mitochondrion. Serine 49 carries the post-translational modification Phosphoserine. 124-131 (ASLYLGIG) provides a ligand contact to ATP. 2 consecutive PLD phosphodiesterase domains span residues 215-241 (TIGL…SDSY) and 419-457 (FGAK…LQEY). Catalysis depends on residues histidine 220, lysine 222, and aspartate 227.

It belongs to the CDP-alcohol phosphatidyltransferase class-II family.

It is found in the mitochondrion. It carries out the reaction a CDP-1,2-diacyl-sn-glycerol + sn-glycerol 3-phosphate = a 1,2-diacyl-sn-glycero-3-phospho-(1'-sn-glycero-3'-phosphate) + CMP + H(+). The protein operates within phospholipid metabolism; phosphatidylglycerol biosynthesis; phosphatidylglycerol from CDP-diacylglycerol: step 1/2. With respect to regulation, activated by calcium and magnesium and inhibited by other bivalent cations. In terms of biological role, functions in the biosynthesis of the anionic phospholipids phosphatidylglycerol and cardiolipin. This Bos taurus (Bovine) protein is CDP-diacylglycerol--glycerol-3-phosphate 3-phosphatidyltransferase, mitochondrial (PGS1).